A 237-amino-acid polypeptide reads, in one-letter code: UPF0758 protein Aave_3773 (237 aa).

One can recognise an MPN domain in the interval 115–237; that stretch reads LFHSPRAVRD…SLSMAEEGLI (123 aa). Positions 186, 188, and 199 each coordinate Zn(2+). The short motif at 186 to 199 is the JAMM motif element; that stretch reads HNHPSGQVQPSRAD.

This sequence belongs to the UPF0758 family.

This Paracidovorax citrulli (strain AAC00-1) (Acidovorax citrulli) protein is UPF0758 protein Aave_3773.